Reading from the N-terminus, the 258-residue chain is MADTNPIKQFEVHEVFPFEAFGLNLAFTNSSYFMVLTTVLTIVLFMVAMSSRALVPNRAQSVAEIIYGFVADMVRSTAGQEGLRFFPFVFTLFIFILVANMLGMFPYFPAPGAHSFTITSHLIVTVALAMLVWLTVIIYGVFKNGFGFLKLFVPSGVPIFVLPLVVVIEIISFVSRPLSHSVRLFANMLAGHILLKVFAGFVVTLAAAWGGFGYLAGIAPLAMAVSLTALEFLVAFLQAYVFAMLTCIYLNDALHPGH.

6 helical membrane-spanning segments follow: residues 30-50, 85-105, 122-142, 151-171, 198-218, and 230-250; these read SSYF…VAMS, FFPF…LGMF, LIVT…YGVF, LFVP…IEII, FAGF…LAGI, and LEFL…CIYL.

The protein belongs to the ATPase A chain family. In terms of assembly, F-type ATPases have 2 components, CF(1) - the catalytic core - and CF(0) - the membrane proton channel. CF(1) has five subunits: alpha(3), beta(3), gamma(1), delta(1), epsilon(1). CF(0) has three main subunits: a(1), b(2) and c(9-12). The alpha and beta chains form an alternating ring which encloses part of the gamma chain. CF(1) is attached to CF(0) by a central stalk formed by the gamma and epsilon chains, while a peripheral stalk is formed by the delta and b chains.

It localises to the cell inner membrane. Its function is as follows. Key component of the proton channel; it plays a direct role in the translocation of protons across the membrane. The polypeptide is ATP synthase subunit a (Maricaulis maris (strain MCS10) (Caulobacter maris)).